The following is a 1107-amino-acid chain: Unconventional myosin-Ie (1107 aa).

The Myosin motor domain occupies S19–E692. ATP is bound at residue G112 to T119. The tract at residues P581–E591 is actin-binding. Residues Y695–D724 form the IQ domain. Positions K730–P922 constitute a TH1 domain. The interval I920–V1052 is disordered. Polar residues-rich tracts occupy residues R933–Y949, S977–T989, and R998–E1012. A Phosphoserine modification is found at S1001. Positions R1034–Q1051 are enriched in pro residues. The region spanning P1050–I1107 is the SH3 domain.

This sequence belongs to the TRAFAC class myosin-kinesin ATPase superfamily. Myosin family. Interacts with CALM and F-actin. Interacts (via SH3 domain) with SYNJ1, DNM1 and DNM2. Interacts with ARL14EP. Interacts with CARMIL1. In terms of tissue distribution, detected in brain stem, brain cortex, cerebellum, stomach, colon, heart, lung, liver, spleen and kidney. Detected in utricle, cochlea, outer hair cell bundle cuticular plate and vestibular epithelia (at protein level). Detected in cochlea and vestibular tissues. Detected in kidney, lung, spleen and intestine.

It is found in the cytoplasm. The protein resides in the cytoskeleton. It localises to the cytoplasmic vesicle. Its subcellular location is the clathrin-coated vesicle. The protein localises to the cell junction. Functionally, myosins are actin-based motor molecules with ATPase activity. Unconventional myosins serve in intracellular movements. Their highly divergent tails bind to membranous compartments, which are then moved relative to actin filaments. Binds to membranes containing anionic phospholipids via its tail domain. Involved in clathrin-mediated endocytosis and intracellular movement of clathrin-coated vesicles. Required for normal morphology of the glomerular basement membrane, normal development of foot processes by kidney podocytes and normal kidney function. In dendritic cells, may control the movement of class II-containing cytoplasmic vesicles along the actin cytoskeleton by connecting them with the actin network via ARL14EP and ARL14. The chain is Unconventional myosin-Ie (Myo1e) from Rattus norvegicus (Rat).